Consider the following 161-residue polypeptide: MASVVEALIPGGKANPGPPLGPALGPLGVNIKDVIEKINEKTKDYNGMQVPVKVIVNDDKSVEIEVGTPPTSALILKELNIEKGSGESGTVVVGNLEIAQVAKIARMKKDDILSYSLKAAIKEVMGTCVPMGVTIENLDPRECQKAVDEGKFDESLTAEAW.

It belongs to the universal ribosomal protein uL11 family. Part of the ribosomal stalk of the 50S ribosomal subunit. Interacts with L10 and the large rRNA to form the base of the stalk. L10 forms an elongated spine to which L12 dimers bind in a sequential fashion forming a multimeric L10(L12)X complex.

Forms part of the ribosomal stalk which helps the ribosome interact with GTP-bound translation factors. The protein is Large ribosomal subunit protein uL11 of Methanococcoides burtonii (strain DSM 6242 / NBRC 107633 / OCM 468 / ACE-M).